A 37-amino-acid chain; its full sequence is Large ribosomal subunit protein bL36c (37 aa).

Belongs to the bacterial ribosomal protein bL36 family.

It localises to the plastid. Its subcellular location is the chloroplast. This Pisum sativum (Garden pea) protein is Large ribosomal subunit protein bL36c (rpl36).